A 276-amino-acid polypeptide reads, in one-letter code: MNAAIRVERLNKTFAGKQALFDLGLAIQPGEMVALIGASGSGKSTLLRHLAGLACCDRSAGGRIEVLGREVQATGRLHGEVRRLRADIGYIFQQFNLVTRLSVLDNVLLGFLGRMPRWRGSLGMFSDEQKRQAMAALERVGLAERAAQRASTLSGGQQQRVAIARALTQQAEVILADEPIASLDPESARKVMEILADINRQDGKTVVVTLHQVDYALRYCSRAVALKGGRIHYDGPSAALSDRLLNDLYGADLDASLLFSDRARNAEPRSLQLVNG.

The 249-residue stretch at 5-253 folds into the ABC transporter domain; it reads IRVERLNKTF…LLNDLYGADL (249 aa). 37 to 44 provides a ligand contact to ATP; it reads GASGSGKS.

It belongs to the ABC transporter superfamily. Phosphonates importer (TC 3.A.1.9.1) family. As to quaternary structure, the complex is composed of two ATP-binding proteins (PhnC), two transmembrane proteins (PhnE) and a solute-binding protein (PhnD).

The protein resides in the cell inner membrane. The enzyme catalyses phosphonate(out) + ATP + H2O = phosphonate(in) + ADP + phosphate + H(+). Its function is as follows. Part of the ABC transporter complex PhnCDE involved in phosphonates import. Responsible for energy coupling to the transport system. In Stutzerimonas stutzeri (Pseudomonas stutzeri), this protein is Phosphonates import ATP-binding protein PhnC.